Here is a 158-residue protein sequence, read N- to C-terminus: Protein Smg homolog (158 aa).

The protein belongs to the Smg family.

The chain is Protein Smg homolog from Coxiella burnetii (strain RSA 331 / Henzerling II).